A 775-amino-acid polypeptide reads, in one-letter code: MSQDVFKHLTSKQVQRTRARSFGASFERPLASFLPKKENKNLLSNAARVKLLTFSSSSPYSFSYSPVLSRDANDGYIPLDTSSRANLWESVTDYDLQHANEPLVGNYYISTEALGDGLNRSPFTINPEKRRSLSDISYVPIPHKEHSNWPVHCSSQAIVTTSNTTFSIWSANDYFCLLFGYAGSQLNRHSVFDIFPKSFSSHLSNLIVSFPIDNEHERILFCGDVFPVITVDGVRLMDFWVKEKQGKLIWILEFVEESYIDIKLQDGVAVDERTEQPLTSDLLPSRLPKTWDQRLYLTTKTTEGYYCPSMIYPLSKSSFQYIIFHYAAGLLFINSDFKIISLNEALFESMLGYSDLLTKDISLIFPDFKLVLQQLADSHALDPGRVVSEIHVRHAYRTCTADKMKKADYPYLIHSDGNIIQIDCQIISVSPHSVKSNEPAFGVWLIFDSVDNRASDFVRSMRSSVILEEVVISDESEEEEDLSADEDYVDSEWEVVPHNIASYTTIKELGIGAYGQVKLATYKSNKVHEVILKSISKSRILLDSWMRDKDLGTVPMEISILHFLKAHSHPNIVKMITFFEDNENYYLLTEPQKPGIDLFDYIELKPSISEKESKAIFFQIALAVAHLHSFDIIHRDIKDENVILEGNGCARLIDFGSSSLTKNGPFDTFRGTVGFAAPELLRGEKYLGKEQDIWALGILLYTIVYRENPYYNIEEILDAKLRIPFELSKDNVDLICRMLDRNVHDRITIEETLQHHWFDDIRYLDTSHIRIPLSS.

A phosphoserine mark is found at S132 and S134. Residues 503-758 (YTTIKELGIG…IEETLQHHWF (256 aa)) form the Protein kinase domain. Residues 509–517 (LGIGAYGQV) and K533 each bind ATP. D636 (proton acceptor) is an active-site residue.

Belongs to the protein kinase superfamily. Ser/Thr protein kinase family.

The protein resides in the cytoplasm. It localises to the nucleus. It carries out the reaction L-seryl-[protein] + ATP = O-phospho-L-seryl-[protein] + ADP + H(+). The enzyme catalyses L-threonyl-[protein] + ATP = O-phospho-L-threonyl-[protein] + ADP + H(+). In Schizosaccharomyces pombe (strain 972 / ATCC 24843) (Fission yeast), this protein is Serine/threonine-protein kinase ppk6 (ppk6).